We begin with the raw amino-acid sequence, 78 residues long: Dihydrofolate reductase type 2 (78 aa).

NADP(+)-binding positions include 32–36 (KKSGA) and 66–69 (VQIY). Ile-68 contributes to the substrate binding site.

Homotetramer.

It carries out the reaction (6S)-5,6,7,8-tetrahydrofolate + NADP(+) = 7,8-dihydrofolate + NADPH + H(+). Its pathway is cofactor biosynthesis; tetrahydrofolate biosynthesis; 5,6,7,8-tetrahydrofolate from 7,8-dihydrofolate: step 1/1. In terms of biological role, key enzyme in folate metabolism. Catalyzes an essential reaction for de novo glycine and purine synthesis, and for DNA precursor synthesis. This is Dihydrofolate reductase type 2 from Escherichia coli.